The sequence spans 87 residues: Translation initiation factor IF-1 2 (87 aa).

In terms of domain architecture, S1-like spans methionine 1–isoleucine 72.

Belongs to the IF-1 family. Component of the 30S ribosomal translation pre-initiation complex which assembles on the 30S ribosome in the order IF-2 and IF-3, IF-1 and N-formylmethionyl-tRNA(fMet); mRNA recruitment can occur at any time during PIC assembly.

The protein resides in the cytoplasm. Functionally, one of the essential components for the initiation of protein synthesis. Stabilizes the binding of IF-2 and IF-3 on the 30S subunit to which N-formylmethionyl-tRNA(fMet) subsequently binds. Helps modulate mRNA selection, yielding the 30S pre-initiation complex (PIC). Upon addition of the 50S ribosomal subunit IF-1, IF-2 and IF-3 are released leaving the mature 70S translation initiation complex. In Dechloromonas aromatica (strain RCB), this protein is Translation initiation factor IF-1 2.